The primary structure comprises 493 residues: Flagellin (493 aa).

It belongs to the bacterial flagellin family.

The protein resides in the secreted. Its subcellular location is the bacterial flagellum. Its function is as follows. Flagellin is the subunit protein which polymerizes to form the filaments of bacterial flagella. In Salmonella rubislaw, this protein is Flagellin (fliC).